A 119-amino-acid chain; its full sequence is Large ribosomal subunit protein uL24 (119 aa).

The protein belongs to the universal ribosomal protein uL24 family. Part of the 50S ribosomal subunit.

Functionally, one of two assembly initiator proteins, it binds directly to the 5'-end of the 23S rRNA, where it nucleates assembly of the 50S subunit. Its function is as follows. Located at the polypeptide exit tunnel on the outside of the subunit. The protein is Large ribosomal subunit protein uL24 of Saccharolobus solfataricus (strain ATCC 35092 / DSM 1617 / JCM 11322 / P2) (Sulfolobus solfataricus).